The chain runs to 354 residues: Lipoyl synthase, mitochondrial (354 aa).

7 residues coordinate [4Fe-4S] cluster: C91, C96, C102, C122, C126, C129, and S337. The Radical SAM core domain occupies 107-326; the sequence is DDSLATATIM…AEYSKKLGFL (220 aa).

It belongs to the radical SAM superfamily. Lipoyl synthase family. [4Fe-4S] cluster is required as a cofactor.

It is found in the mitochondrion. The catalysed reaction is [[Fe-S] cluster scaffold protein carrying a second [4Fe-4S](2+) cluster] + N(6)-octanoyl-L-lysyl-[protein] + 2 oxidized [2Fe-2S]-[ferredoxin] + 2 S-adenosyl-L-methionine + 4 H(+) = [[Fe-S] cluster scaffold protein] + N(6)-[(R)-dihydrolipoyl]-L-lysyl-[protein] + 4 Fe(3+) + 2 hydrogen sulfide + 2 5'-deoxyadenosine + 2 L-methionine + 2 reduced [2Fe-2S]-[ferredoxin]. It functions in the pathway protein modification; protein lipoylation via endogenous pathway; protein N(6)-(lipoyl)lysine from octanoyl-[acyl-carrier-protein]: step 2/2. Functionally, catalyzes the radical-mediated insertion of two sulfur atoms into the C-6 and C-8 positions of the octanoyl moiety bound to the lipoyl domains of lipoate-dependent enzymes, thereby converting the octanoylated domains into lipoylated derivatives. The protein is Lipoyl synthase, mitochondrial of Caenorhabditis elegans.